A 350-amino-acid polypeptide reads, in one-letter code: Zinc finger protein 367 (350 aa).

The segment at serine 104–aspartate 151 is disordered. Basic and acidic residues predominate over residues glycine 137–aspartate 151. 2 C2H2-type zinc fingers span residues isoleucine 167 to histidine 189 and tyrosine 195 to histidine 219. The segment at lysine 290–glutamine 327 is disordered. A coiled-coil region spans residues leucine 308–asparagine 342. Phosphoserine is present on serine 310. The span at glutamate 316 to glutamine 327 shows a compositional bias: basic and acidic residues.

The protein belongs to the krueppel C2H2-type zinc-finger protein family.

The protein resides in the nucleus. Its function is as follows. Transcriptional activator. Isoform 1 may be involved in transcriptional activation of erythroid genes. In Homo sapiens (Human), this protein is Zinc finger protein 367 (ZNF367).